The sequence spans 422 residues: ATP-dependent Clp protease ATP-binding subunit ClpX 1 (422 aa).

In terms of domain architecture, ClpX-type ZB spans D4–E57. Residues C16, C19, C38, and C41 each contribute to the Zn(2+) site. An ATP-binding site is contributed by P120–L127.

It belongs to the ClpX chaperone family. As to quaternary structure, component of the ClpX-ClpP complex. Forms a hexameric ring that, in the presence of ATP, binds to fourteen ClpP subunits assembled into a disk-like structure with a central cavity, resembling the structure of eukaryotic proteasomes.

Functionally, ATP-dependent specificity component of the Clp protease. It directs the protease to specific substrates. Can perform chaperone functions in the absence of ClpP. The chain is ATP-dependent Clp protease ATP-binding subunit ClpX 1 from Methylococcus capsulatus (strain ATCC 33009 / NCIMB 11132 / Bath).